A 162-amino-acid chain; its full sequence is Zinc finger protein ZAT12 (162 aa).

2 C2H2-type zinc fingers span residues 39-61 (FTCK…RASH) and 82-104 (HPCP…MRRH).

As to expression, expressed in roots, stems and flowers.

Its subcellular location is the nucleus. Its function is as follows. Transcriptional repressor involved in light acclimation, cold and oxidative stress responses. May regulate a collection of transcripts involved in response to high-light, cold and oxidative stress. The polypeptide is Zinc finger protein ZAT12 (ZAT12) (Arabidopsis thaliana (Mouse-ear cress)).